Consider the following 476-residue polypeptide: Angiotensinogen (476 aa).

Positions 1-24 are cleaved as a signal peptide; the sequence is MAPAGVSLRATILCLVAWAGLAAG. N-linked (GlcNAc...) asparagine glycans are attached at residues N38, N161, N295, and N319. The cysteines at positions 42 and 162 are disulfide-linked.

It belongs to the serpin family. In response to low blood pressure, the enzyme renin/REN cleaves angiotensinogen to produce angiotensin-1. Angiotensin-1 is a substrate of ACE (angiotensin converting enzyme) that removes a dipeptide to yield the physiologically active peptide angiotensin-2. Angiotensin-1 and angiotensin-2 can be further processed to generate angiotensin-3, angiotensin-4. Angiotensin 1-9 is cleaved from angiotensin-1 by ACE2 and can be further processed by ACE to produce angiotensin 1-7, angiotensin 1-5 and angiotensin 1-4. Angiotensin 1-7 has also been proposed to be cleaved from angiotensin-2 by ACE2 or from angiotensin-1 by MME (neprilysin). Post-translationally, the disulfide bond is labile. Angiotensinogen is present in the circulation in a near 40:60 ratio with the oxidized disulfide-bonded form, which preferentially interacts with receptor-bound renin.

It is found in the secreted. Essential component of the renin-angiotensin system (RAS), a potent regulator of blood pressure, body fluid and electrolyte homeostasis. In terms of biological role, acts directly on vascular smooth muscle as a potent vasoconstrictor, affects cardiac contractility and heart rate through its action on the sympathetic nervous system, and alters renal sodium and water absorption through its ability to stimulate the zona glomerulosa cells of the adrenal cortex to synthesize and secrete aldosterone. Acts by binding to angiotensin receptors AGTR1 and AGTR2. Also binds the DEAR/FBXW7-AS1 receptor. Functionally, stimulates aldosterone release. Its function is as follows. Is a ligand for the G-protein coupled receptor MAS1. Has vasodilator and antidiuretic effects. Has an antithrombotic effect that involves MAS1-mediated release of nitric oxide from platelets. The chain is Angiotensinogen (AGT) from Pan troglodytes (Chimpanzee).